A 158-amino-acid chain; its full sequence is Pleckstrin homology domain-containing family J member 1 (158 aa).

A PH domain is found at 15–108 (PTQRAAELGM…WIDAIIKASY (94 aa)).

This chain is Pleckstrin homology domain-containing family J member 1 (plekhj1), found in Danio rerio (Zebrafish).